The chain runs to 1231 residues: S-layer protein A (1231 aa).

The signal sequence occupies residues 1–35 (MNKTLGLILTSVFLLSTLGIITGFVIPTQAANSND).

Belongs to the Sulfolobales SlaA family. In terms of assembly, the mushroom-shaped unit cells of the Sulfolobales' S-layers may consist of three SlaB subunits and six SlaA subunits.

The protein resides in the secreted. The protein localises to the cell wall. It is found in the S-layer. In terms of biological role, S-layer large protein. May form the highly ordered outer sheath. The sequence is that of S-layer protein A from Saccharolobus solfataricus (strain ATCC 35092 / DSM 1617 / JCM 11322 / P2) (Sulfolobus solfataricus).